A 343-amino-acid polypeptide reads, in one-letter code: Methylthioribose-1-phosphate isomerase (343 aa).

Substrate contacts are provided by residues 48-50, Arg88, and Gln193; that span reads RGA. Asp234 functions as the Proton donor in the catalytic mechanism. Residue 244–245 coordinates substrate; the sequence is NK.

It belongs to the eIF-2B alpha/beta/delta subunits family. MtnA subfamily.

The enzyme catalyses 5-(methylsulfanyl)-alpha-D-ribose 1-phosphate = 5-(methylsulfanyl)-D-ribulose 1-phosphate. The protein operates within amino-acid biosynthesis; L-methionine biosynthesis via salvage pathway; L-methionine from S-methyl-5-thio-alpha-D-ribose 1-phosphate: step 1/6. Catalyzes the interconversion of methylthioribose-1-phosphate (MTR-1-P) into methylthioribulose-1-phosphate (MTRu-1-P). This Thermotoga neapolitana (strain ATCC 49049 / DSM 4359 / NBRC 107923 / NS-E) protein is Methylthioribose-1-phosphate isomerase.